We begin with the raw amino-acid sequence, 209 residues long: Thymidine kinase (209 aa).

ATP is bound by residues 9–16 (AAMNAGKS) and 88–91 (DEAQ). Catalysis depends on Glu89, which acts as the Proton acceptor. Zn(2+)-binding residues include Cys146, Cys148, Cys183, and His186.

This sequence belongs to the thymidine kinase family. Homotetramer.

Its subcellular location is the cytoplasm. It carries out the reaction thymidine + ATP = dTMP + ADP + H(+). The protein is Thymidine kinase of Legionella pneumophila (strain Lens).